The sequence spans 316 residues: Ribosomal RNA small subunit methyltransferase H (316 aa).

S-adenosyl-L-methionine is bound by residues 35–37, Asp55, Phe84, Asp105, and Gln112; that span reads SGH.

Belongs to the methyltransferase superfamily. RsmH family.

It is found in the cytoplasm. It carries out the reaction cytidine(1402) in 16S rRNA + S-adenosyl-L-methionine = N(4)-methylcytidine(1402) in 16S rRNA + S-adenosyl-L-homocysteine + H(+). In terms of biological role, specifically methylates the N4 position of cytidine in position 1402 (C1402) of 16S rRNA. In Streptococcus equi subsp. equi (strain 4047), this protein is Ribosomal RNA small subunit methyltransferase H.